We begin with the raw amino-acid sequence, 1213 residues long: Protein jagged-1b (1213 aa).

The N-terminal stretch at 1-26 (MILRRSSVFSAFYLHAFLLCLRTTVS) is a signal peptide. The Extracellular portion of the chain corresponds to 27–1064 (DASGHFELEI…HQIPSPKTDY (1038 aa)). N-linked (GlcNAc...) asparagine glycosylation is present at Asn-139. In terms of domain architecture, DSL spans 182 to 226 (VTCLEHYYGFGCNKFCRPRDEFFGHYTCDQNGNKTCLEGWTGPDC). 2 disulfide bridges follow: Cys-184-Cys-193 and Cys-197-Cys-209. N-linked (GlcNAc...) asparagine glycosylation occurs at Asn-214. Disulfide bonds link Cys-217/Cys-226, Cys-231/Cys-242, Cys-235/Cys-248, Cys-250/Cys-259, Cys-262/Cys-273, Cys-268/Cys-279, Cys-281/Cys-290, Cys-297/Cys-309, Cys-303/Cys-319, Cys-321/Cys-330, Cys-337/Cys-348, Cys-342/Cys-357, Cys-359/Cys-368, Cys-375/Cys-386, Cys-380/Cys-395, Cys-397/Cys-406, Cys-413/Cys-424, Cys-418/Cys-433, Cys-435/Cys-444, Cys-451/Cys-461, Cys-455/Cys-470, Cys-472/Cys-481, Cys-488/Cys-499, Cys-493/Cys-508, Cys-510/Cys-519, Cys-526/Cys-537, Cys-531/Cys-546, Cys-548/Cys-557, Cys-596/Cys-612, Cys-614/Cys-623, Cys-630/Cys-641, Cys-635/Cys-650, Cys-652/Cys-661, Cys-668/Cys-679, Cys-673/Cys-688, Cys-690/Cys-699, Cys-706/Cys-717, Cys-711/Cys-726, and Cys-728/Cys-737. Residues 227-260 (NTAICRQGCSTEHGSCKQPGGCKCLYGWQGPYCD) form the EGF-like 1 domain. The EGF-like 2; atypical domain maps to 261-291 (KCIPHPGCVHGTCVEPWQCLCDTNWGGQLCD). 2 consecutive EGF-like domains span residues 293 to 331 (DLNY…VNCE) and 333 to 369 (AEHA…TSCE). The EGF-like 5; calcium-binding domain occupies 371–407 (NVDDCTPNQCKHGGTCQDLVNGFKCACPPHWTGKTCQ). The EGF-like 6; calcium-binding domain maps to 409–445 (DANECEDKPCVNAKSCHNLIGAYFCECLPGWSGQNCD). Residues 447–482 (NINDCKGQCLNGGTCKDLVNGYRCLCPPGYTGEQCE) enclose the EGF-like 7; calcium-binding domain. In terms of domain architecture, EGF-like 8; calcium-binding spans 484–520 (DVDECASSPCLNGGRCQDEVNGFQCLCPAGFSGQLCQ). 2 EGF-like domains span residues 522-558 (DIDY…KNCS) and 592-624 (SSNV…TYCH). A glycan (N-linked (GlcNAc...) asparagine) is linked at Asn-556. Positions 626–662 (NINDCESNPCRNGGTCIDKVNVYQCICADGWEGVHCE) constitute an EGF-like 11; calcium-binding domain. Residues 664–700 (NIDDCSLNPCLNKGACQDLVNDFYCECRNGWKGKTCH) form the EGF-like 12; calcium-binding domain. An EGF-like 13 domain is found at 702 to 738 (RDSQCDEATCNNGGTCHDEGDTFKCRCSPGWEGATCN). Asn-742 carries N-linked (GlcNAc...) asparagine glycosylation. Cystine bridges form between Cys-745/Cys-756, Cys-750/Cys-765, Cys-767/Cys-776, Cys-783/Cys-794, Cys-788/Cys-803, Cys-805/Cys-814, Cys-821/Cys-832, Cys-826/Cys-841, and Cys-843/Cys-852. The EGF-like 14 domain maps to 746 to 777 (LPNPCENGGTCVVNGDSFNCVCKEGWEGSTCT). Residues 779-815 (NTNDCNPHPCYNSGTCVDGENWYRCECAPGFAGPDCR) enclose the EGF-like 15; calcium-binding domain. The region spanning 817-853 (NINECQSSPCAFGSTCVDEINGYRCLCPPGRIGPDCQ) is the EGF-like 16; calcium-binding domain. Residues 860-914 (CIANGQVTADGAKWEEDCNICQCQNGRIHCTMMWCGPKSCRIGKARGGCPASQSC) form the VWFC domain. Residues 918 to 956 (KEEQCFVKPCPSLGECWPSAPPPPSKCHASFSYQDDSCA) enclose the EGF-like 17 domain. N-linked (GlcNAc...) asparagine glycans are attached at residues Asn-957, Asn-988, and Asn-1042. A helical transmembrane segment spans residues 1065–1087 (LVPLLSSIFIVLWIFALASAFLW). Over 1088-1213 (CIHRRRKQNT…QSLNRMEYIV (126 aa)) the chain is Cytoplasmic. The disordered stretch occupies residues 1181 to 1202 (EERAPNKNPNWTNKQDNRDLET).

It localises to the membrane. The protein resides in the cell membrane. Its function is as follows. Ligand for Notch receptors and involved in the mediation of Notch signaling. Seems to be involved in cell-fate decisions. The polypeptide is Protein jagged-1b (jag1b) (Danio rerio (Zebrafish)).